Reading from the N-terminus, the 292-residue chain is ATP synthase gamma chain (292 aa).

The protein belongs to the ATPase gamma chain family. F-type ATPases have 2 components, CF(1) - the catalytic core - and CF(0) - the membrane proton channel. CF(1) has five subunits: alpha(3), beta(3), gamma(1), delta(1), epsilon(1). CF(0) has three main subunits: a, b and c.

The protein localises to the cell membrane. In terms of biological role, produces ATP from ADP in the presence of a proton gradient across the membrane. The gamma chain is believed to be important in regulating ATPase activity and the flow of protons through the CF(0) complex. The sequence is that of ATP synthase gamma chain from Prosthecochloris aestuarii (strain DSM 271 / SK 413).